The primary structure comprises 264 residues: Thymidylate synthase (264 aa).

Residue Arg-21 coordinates dUMP. His-51 contributes to the (6R)-5,10-methylene-5,6,7,8-tetrahydrofolate binding site. Residue 126-127 (RR) participates in dUMP binding. Residue Cys-146 is the Nucleophile of the active site. DUMP-binding positions include 166–169 (RSAD), Asn-177, and 207–209 (HLY). A (6R)-5,10-methylene-5,6,7,8-tetrahydrofolate-binding site is contributed by Asp-169. Position 263 (Ala-263) interacts with (6R)-5,10-methylene-5,6,7,8-tetrahydrofolate.

This sequence belongs to the thymidylate synthase family. Bacterial-type ThyA subfamily. In terms of assembly, homodimer.

The protein resides in the cytoplasm. It carries out the reaction dUMP + (6R)-5,10-methylene-5,6,7,8-tetrahydrofolate = 7,8-dihydrofolate + dTMP. It functions in the pathway pyrimidine metabolism; dTTP biosynthesis. Its function is as follows. Catalyzes the reductive methylation of 2'-deoxyuridine-5'-monophosphate (dUMP) to 2'-deoxythymidine-5'-monophosphate (dTMP) while utilizing 5,10-methylenetetrahydrofolate (mTHF) as the methyl donor and reductant in the reaction, yielding dihydrofolate (DHF) as a by-product. This enzymatic reaction provides an intracellular de novo source of dTMP, an essential precursor for DNA biosynthesis. This Azotobacter vinelandii (strain DJ / ATCC BAA-1303) protein is Thymidylate synthase.